Here is a 299-residue protein sequence, read N- to C-terminus: Delta-9 desaturase-like 1 protein (299 aa).

2 helical membrane passes run Ile31 to Phe51 and Trp55 to Ser75. The Histidine box-1 signature appears at His77–His82. The Histidine box-2 motif lies at His114 to His118. Helical transmembrane passes span Ile174–Leu194 and Val198–Ile218. Positions His246 to His250 match the Histidine box-3 motif. The helical transmembrane segment at Trp262–Thr282 threads the bilayer.

Belongs to the fatty acid desaturase type 1 family. The cofactor is Fe cation.

Its subcellular location is the endoplasmic reticulum membrane. It functions in the pathway lipid metabolism; polyunsaturated fatty acid biosynthesis. This Arabidopsis thaliana (Mouse-ear cress) protein is Delta-9 desaturase-like 1 protein.